A 207-amino-acid chain; its full sequence is Large ribosomal subunit protein uL3c (207 aa).

The disordered stretch occupies residues 129 to 148; the sequence is TRGPMTHGSKNHRAPGSIGM.

Belongs to the universal ribosomal protein uL3 family. Part of the 50S ribosomal subunit.

Its subcellular location is the plastid. It is found in the chloroplast. One of the primary rRNA binding proteins, it binds directly near the 3'-end of the 23S rRNA, where it nucleates assembly of the 50S subunit. The sequence is that of Large ribosomal subunit protein uL3c (rpl3) from Phaeodactylum tricornutum (strain CCAP 1055/1).